Consider the following 198-residue polypeptide: 7-methyl-GTP pyrophosphatase (198 aa).

Residue Asp-75 is the Proton acceptor of the active site.

Belongs to the Maf family. YceF subfamily. The cofactor is a divalent metal cation.

The protein localises to the cytoplasm. It carries out the reaction N(7)-methyl-GTP + H2O = N(7)-methyl-GMP + diphosphate + H(+). Functionally, nucleoside triphosphate pyrophosphatase that hydrolyzes 7-methyl-GTP (m(7)GTP). May have a dual role in cell division arrest and in preventing the incorporation of modified nucleotides into cellular nucleic acids. The protein is 7-methyl-GTP pyrophosphatase of Bartonella henselae (strain ATCC 49882 / DSM 28221 / CCUG 30454 / Houston 1) (Rochalimaea henselae).